Reading from the N-terminus, the 963-residue chain is Spliceosome associated factor 3, U4/U6 recycling protein (963 aa).

Residues 1 to 11 (MATAAATSASE) are compositionally biased toward low complexity. Disordered regions lie at residues 1-36 (MATAAATSASEPEAESKAGPKADGEEDEVKAARTRR) and 49-86 (KTMGPGWDQQEEGVSESDGDEYAMASSAESSPGEYEWE). Alanine 2 carries the post-translational modification N-acetylalanine. Positions 2–351 (ATAAATSASE…LVPDLWIRYS (350 aa)) are mediates interaction with PRPF3. Residues serine 10 and serine 16 each carry the phosphoserine modification. Positions 14 to 23 (AESKAGPKAD) are enriched in basic and acidic residues. Residues 21–46 (KADGEEDEVKAARTRRKVLSRAVAAA) are a coiled coil. Over residues 57 to 69 (QQEEGVSESDGDE) the composition is skewed to acidic residues. Positions 82 to 110 (EYEWEYDEEEEKNQLEIERLEEQLSINVY) form a coiled coil. 8 HAT repeats span residues 126 to 158 (GELTKVRMARQKMSEIFPLTEELWLEWLHDEIS), 164 to 195 (LDREHVYDLFEKAVKDYICPNIWLEYGQYSVG), 201 to 237 (GGLEKVRSVFERALSSVGLHMSKGLALWEAYREFESA), 242 to 275 (ARLEKVHSLFRRQLAIPLYDMEATFAEYEEWSED), 324 to 356 (GDPARIQLIFERALVENCLVPDLWIRYSQYLDR), 359 to 391 (KVKDLVLSVHNRAIRNCPWTVALWSRYLLAMER), 394 to 430 (VDHQVISVTFEKALNAGFIQATDYVEIWQAYLDYLRR), and 487 to 520 (NNMQKARELWDSIMTRGNAKYANMWLEYYNLERA). Position 215 is a phosphoserine (serine 215). The interval 487–520 (NNMQKARELWDSIMTRGNAKYANMWLEYYNLERA) is required for interaction with USP4. The segment at 537-953 (CTSDYPEHVC…AATEAPKMSN (417 aa)) is necessary and sufficient for U6 snRNA binding. A coiled-coil region spans residues 559–619 (LEDWDIAVQK…ALKKKKKIRG (61 aa)). Residues 600–670 (QRKRARAEKK…EVAPGPAGKC (71 aa)) are required for nuclear localization. The Nuclear localization signal motif lies at 601 to 608 (RKRARAEK). Over residues 608–619 (KKALKKKKKIRG) the composition is skewed to basic and acidic residues. The tract at residues 608–712 (KKALKKKKKI…SITVFVSNLP (105 aa)) is disordered. Residues 620–635 (PEKRGADEDDEKEWGD) show a composition bias toward basic residues. The segment covering 644 to 657 (RRRVENSIPAAGET) has biased composition (acidic residues). Position 650 is a phosphoserine (serine 650). Threonine 657 bears the Phosphothreonine mark. The segment covering 695 to 712 (VLHDSSKDSITVFVSNLP) has biased composition (basic and acidic residues). One can recognise an RRM 1 domain in the interval 704-782 (ITVFVSNLPY…RPMFVSPCVD (79 aa)). A phosphoserine mark is found at serine 769, serine 795, and serine 852. The RRM 2 domain occupies 801 to 878 (HKLFISGLPF…NVIKVAISNP (78 aa)). A compositionally biased stretch (basic and acidic residues) spans 900–909 (PQTYGARGKG). Residue arginine 906 is modified to Omega-N-methylarginine.

In terms of assembly, component of the 7SK snRNP complex at least composed of P-TEFb (composed of CDK9 and CCNT1/cyclin-T1), HEXIM1, HEXIM2, BCDIN3, SART3 proteins and 7SK and U6 snRNAs. Interacts with AGO1 and AGO2. Interacts with PRPF3 and USP4; the interaction with PRPF3 is direct and recruits USP4 to its substrate PRPF3. Interacts with USP15; the interaction is direct.

It localises to the nucleus. It is found in the nucleoplasm. The protein localises to the cajal body. The protein resides in the nucleus speckle. Its subcellular location is the cytoplasm. Functionally, U6 snRNP-binding protein that functions as a recycling factor of the splicing machinery. Promotes the initial reassembly of U4 and U6 snRNPs following their ejection from the spliceosome during its maturation. Also binds U6atac snRNPs and may function as a recycling factor for U4atac/U6atac spliceosomal snRNP, an initial step in the assembly of U12-type spliceosomal complex. The U12-type spliceosomal complex plays a role in the splicing of introns with non-canonical splice sites. May also function as a substrate-targeting factor for deubiquitinases like USP4 and USP15. Recruits USP4 to ubiquitinated PRPF3 within the U4/U5/U6 tri-snRNP complex, promoting PRPF3 deubiquitination and thereby regulating the spliceosome U4/U5/U6 tri-snRNP spliceosomal complex disassembly. May also recruit the deubiquitinase USP15 to histone H2B and mediate histone deubiquitination, thereby regulating gene expression and/or DNA repair. May play a role in hematopoiesis probably through transcription regulation of specific genes including MYC. The chain is Spliceosome associated factor 3, U4/U6 recycling protein from Pongo abelii (Sumatran orangutan).